Consider the following 442-residue polypeptide: HTH-type transcriptional regulator NorG (442 aa).

One can recognise an HTH gntR-type domain in the interval Lys-2–Tyr-46. The segment at residues His-6–Glu-25 is a DNA-binding region (H-T-H motif). Lys-288 carries the post-translational modification N6-(pyridoxal phosphate)lysine.

In the C-terminal section; belongs to the class-I pyridoxal-phosphate-dependent aminotransferase family. Pyridoxal 5'-phosphate is required as a cofactor.

Positively regulates the expression of the NorB efflux pump and negatively regulates the expression of the AbcA efflux pump. Binds specifically to the promoters of norA, norB and norC and abcA genes. Could also have an aminotransferase activity. The protein is HTH-type transcriptional regulator NorG (norG) of Staphylococcus aureus (strain USA300).